A 266-amino-acid chain; its full sequence is Proteasome subunit alpha type-1 (266 aa).

The tract at residues 235–266 is disordered; sequence DGFKTRPEDIPAVADNEEDDDELHEQPPDVEE. Acidic residues predominate over residues 249 to 266; the sequence is DNEEDDDELHEQPPDVEE.

It belongs to the peptidase T1A family. As to quaternary structure, the 26S proteasome consists of a 20S proteasome core and two 19S regulatory subunits. The 20S proteasome core is composed of 28 subunits that are arranged in four stacked rings, resulting in a barrel-shaped structure. The two end rings are each formed by seven alpha subunits, and the two central rings are each formed by seven beta subunits. The catalytic chamber with the active sites is on the inside of the barrel.

The protein resides in the cytoplasm. Its subcellular location is the nucleus. Its function is as follows. The proteasome is a multicatalytic proteinase complex which is characterized by its ability to cleave peptides with Arg, Phe, Tyr, Leu, and Glu adjacent to the leaving group at neutral or slightly basic pH. The proteasome has an ATP-dependent proteolytic activity. This chain is Proteasome subunit alpha type-1, found in Trypanosoma brucei rhodesiense.